Consider the following 471-residue polypeptide: Arginine biosynthesis bifunctional protein ArgJ, mitochondrial (471 aa).

Residues Thr-201, Lys-230, Thr-241, Glu-328, Asn-466, and Thr-471 each contribute to the substrate site. Residue Thr-241 is the Nucleophile of the active site.

Belongs to the ArgJ family. Heterodimer of an alpha and a beta chain. In terms of processing, the alpha and beta chains are autoproteolytically processed from a single precursor protein within the mitochondrion.

Its subcellular location is the mitochondrion matrix. It catalyses the reaction N(2)-acetyl-L-ornithine + L-glutamate = N-acetyl-L-glutamate + L-ornithine. The enzyme catalyses L-glutamate + acetyl-CoA = N-acetyl-L-glutamate + CoA + H(+). The protein operates within amino-acid biosynthesis; L-arginine biosynthesis; L-ornithine and N-acetyl-L-glutamate from L-glutamate and N(2)-acetyl-L-ornithine (cyclic): step 1/1. Its pathway is amino-acid biosynthesis; L-arginine biosynthesis; N(2)-acetyl-L-ornithine from L-glutamate: step 1/4. In terms of biological role, catalyzes two activities which are involved in the cyclic version of arginine biosynthesis: the synthesis of acetylglutamate from glutamate and acetyl-CoA, and of ornithine by transacetylation between acetylornithine and glutamate. The sequence is that of Arginine biosynthesis bifunctional protein ArgJ, mitochondrial from Ajellomyces capsulatus (strain NAm1 / WU24) (Darling's disease fungus).